A 581-amino-acid polypeptide reads, in one-letter code: Proline--tRNA ligase (581 aa).

Belongs to the class-II aminoacyl-tRNA synthetase family. ProS type 1 subfamily. In terms of assembly, homodimer.

The protein resides in the cytoplasm. The enzyme catalyses tRNA(Pro) + L-proline + ATP = L-prolyl-tRNA(Pro) + AMP + diphosphate. In terms of biological role, catalyzes the attachment of proline to tRNA(Pro) in a two-step reaction: proline is first activated by ATP to form Pro-AMP and then transferred to the acceptor end of tRNA(Pro). As ProRS can inadvertently accommodate and process non-cognate amino acids such as alanine and cysteine, to avoid such errors it has two additional distinct editing activities against alanine. One activity is designated as 'pretransfer' editing and involves the tRNA(Pro)-independent hydrolysis of activated Ala-AMP. The other activity is designated 'posttransfer' editing and involves deacylation of mischarged Ala-tRNA(Pro). The misacylated Cys-tRNA(Pro) is not edited by ProRS. This is Proline--tRNA ligase from Paracidovorax citrulli (strain AAC00-1) (Acidovorax citrulli).